The sequence spans 1235 residues: Cullin-associated NEDD8-dissociated protein 2 (1235 aa).

Ser-2 is subject to N-acetylserine. 26 HEAT repeats span residues 2-39 (STGAFYISSLLEKMTSSDKDFRFMATSDLMSELQKDSI), 44-81 (DSERKVVRTLLRLLEDRSGEVQNLAVKCLGPLVGKVKE), 83-119 (QVENIVDTLCANMRSDKEQLRDIAGIGLKTVLSELPP), 129-167 (NVCRKITGQLTSAIAQQEDVAVQLEALDILSDMLSRLGA), 171-208 (TFHASLLHCLLPQLSSPRLAVRKRTVVALGHLAAACST), 210-246 (LFVELADHLVDRLPGPRAPASPAAIRTLIQCLGSVGR), 254-291 (AHLDRLVPMVEEFCNLDDDELRESCLQAFEAFLRKCPK), 326-367 (TEDS…SRPD), 371-408 (DFHCTLAPALIRRFKEREENVKADIFGAYIMLLRHTRP), 431-468 (AQVPLVIKALQRQLKDRNVRTRQGCFNLFTELAGVLPG), 516-553 (PHLPTLLPPVMACVADPFYKVAAEALLVLQELVRTLWP), 564-603 (PYVGEMSTATLARLRATDLDQEVKERAISCVGHLVGHLGD), 607-644 (DDLEPTLMLLLDRLRNEITRLPAVKALTLVAMSPLRLD), 647-684 (PILAEALPILASFLRKNQRALRLATLAALDALAQSQGL), 689-726 (PAVRTVLTELPALVSENDMHVAQLAVDFLTTVTQTQPS), 730-769 (EVSGPVLGELLQLLHSPLLPAGVLAATEGFLQALVGTRPP), 771-812 (VEYS…ALSA), 856-893 (GPQRELKTVLLEALGSPSEDVRAAAAYALGRVGAGNLP), 895-930 (FLPFLLAQIEAQPRRQYLLLHALREALGAAQPDNLK), 932-965 (YVEDVWALLFQRCESPEEGTRCVVAECIGKLVFV), 966-1002 (NPPYLLPRFRKQLAAGQPYTRSTVITAVKFLISDQPH), 1006-1043 (PLLKSFIAEFMESLQDPDLNVRRATLTFFNSAVHNKPS), 1047-1083 (DLLDDILPLLYQETKIRRDLIREVEMGPFKHTVDDGL), 1104-1140 (LDMCEFLNHVEDGLKDHYDIRMLTFIMLARLATLCPA), 1156-1193 (TCTAKVKAGSVKQELEKQEELKRSAMRAVAALLTNPEV), and 1203-1235 (SAQIRSNPELTTLFESIQKDTASGPSTDSMELS). A disordered region spans residues 314-345 (YDHDSDDEEQMETEDSEFSEQESEDEYSDDDD). Acidic residues predominate over residues 317–345 (DSDDEEQMETEDSEFSEQESEDEYSDDDD).

The protein belongs to the CAND family. In terms of assembly, binds TBP, CNOT3 and UBE3C. Post-translationally, ubiquitinated and targeted for proteasomal degradation. Highly expressed in embryonic limb buds.

It localises to the nucleus. Its function is as follows. Probable assembly factor of SCF (SKP1-CUL1-F-box protein) E3 ubiquitin ligase complexes that promotes the exchange of the substrate-recognition F-box subunit in SCF complexes, thereby playing a key role in the cellular repertoire of SCF complexes. The protein is Cullin-associated NEDD8-dissociated protein 2 (Cand2) of Mus musculus (Mouse).